We begin with the raw amino-acid sequence, 729 residues long: Glutamine synthetase (729 aa).

The GS beta-grasp domain maps to 85-174 (THYTHWFQPL…IPTIFISYTG (90 aa)). The region spanning 179 to 615 (YKTPLLKALA…VLGDLAINHI (437 aa)) is the GS catalytic domain. Residues Glu-215, Glu-217, Glu-286, and Glu-293 each coordinate Mg(2+). Residues 337–338 (NG) and Gly-338 contribute to the L-glutamate site. A Mg(2+)-binding site is contributed by His-342. Residues Ser-346 and Arg-458 each contribute to the ATP site. Arg-458 is a binding site for L-glutamate.

This sequence belongs to the glutamine synthetase family. In terms of assembly, homohexamer. The cofactor is Mg(2+).

It is found in the cytoplasm. It carries out the reaction L-glutamate + NH4(+) + ATP = L-glutamine + ADP + phosphate + H(+). Its activity is regulated as follows. Inhibited by L-histidine (46%), L-arginine (38%) and L-methionine-DL-sulphoximine. The activity of this enzyme is not controlled by adenylation. Its function is as follows. Catalyzes the ATP-dependent biosynthesis of glutamine from glutamate and ammonia. This is Glutamine synthetase from Bacteroides fragilis (strain YCH46).